A 253-amino-acid polypeptide reads, in one-letter code: Hydroxyacylglutathione hydrolase (253 aa).

Positions 54, 56, 58, 59, 112, 131, and 169 each coordinate Zn(2+).

It belongs to the metallo-beta-lactamase superfamily. Glyoxalase II family. As to quaternary structure, monomer. The cofactor is Zn(2+).

It carries out the reaction an S-(2-hydroxyacyl)glutathione + H2O = a 2-hydroxy carboxylate + glutathione + H(+). The protein operates within secondary metabolite metabolism; methylglyoxal degradation; (R)-lactate from methylglyoxal: step 2/2. Thiolesterase that catalyzes the hydrolysis of S-D-lactoyl-glutathione to form glutathione and D-lactic acid. This Bartonella henselae (strain ATCC 49882 / DSM 28221 / CCUG 30454 / Houston 1) (Rochalimaea henselae) protein is Hydroxyacylglutathione hydrolase.